Consider the following 315-residue polypeptide: Hydroxysteroid 11-beta-dehydrogenase 1-like protein (315 aa).

An N-terminal signal peptide occupies residues 1–15 (MKVLLLTGLGALFFA). NADP(+) is bound by residues 36 to 62 (GANA…TAHT), 87 to 88 (DM), and 114 to 116 (NHI). A substrate-binding site is contributed by Ser165. Catalysis depends on Tyr178, which acts as the Proton acceptor. NADP(+) is bound by residues 178–182 (YSAAK) and 211–217 (GLRDRAS). The tract at residues 221-286 (AVRSSTSRPR…SKTEKNDGHL (66 aa)) is disordered. The segment covering 277-286 (SKTEKNDGHL) has biased composition (basic and acidic residues).

This sequence belongs to the short-chain dehydrogenases/reductases (SDR) family. As to expression, highly expressed in the brain.

It localises to the secreted. The enzyme catalyses cortisone + NADPH + H(+) = cortisol + NADP(+). Unidirectional NADP(+)-dependent cortisol dehydrogenase (in vitro). In Homo sapiens (Human), this protein is Hydroxysteroid 11-beta-dehydrogenase 1-like protein (HSD11B1L).